We begin with the raw amino-acid sequence, 389 residues long: Chromobox protein homolog 8 (389 aa).

The 59-residue stretch at 11 to 69 folds into the Chromo domain; that stretch reads FAAEALLKRRIRKGRMEYLVKWKGWSQKYSTWEPEENILDARLLAAFEEREREMELYGP. 2 positions are modified to phosphoserine: serine 110 and serine 130. Positions 124–241 are disordered; sequence LRNMGLSPPA…DDTPSGAGKF (118 aa). The span at 145–189 shows a compositional bias: basic and acidic residues; sequence EAPRDRDRDRDRDRERDRERERERERERERERERERGTSRVDDKP. Phosphoserine is present on residues serine 191, serine 256, serine 265, serine 311, serine 332, and serine 352. The disordered stretch occupies residues 298 to 327; the sequence is GALDPNGTRVRHGSGPPSSGGGLYRDMGAQ.

As to quaternary structure, component of a PRC1-like complex. Interacts with RING1 RNF2, PCGF1, PCGF2, PCGF3, BMI1, PCGF5 and PCGF6. Interacts with MLLT3 and histone H3. Interacts with PHC2.

It localises to the nucleus. In terms of biological role, component of a Polycomb group (PcG) multiprotein PRC1-like complex, a complex class required to maintain the transcriptionally repressive state of many genes, including Hox genes, throughout development. PcG PRC1 complex acts via chromatin remodeling and modification of histones; it mediates monoubiquitination of histone H2A 'Lys-119', rendering chromatin heritably changed in its expressibility. The polypeptide is Chromobox protein homolog 8 (CBX8) (Homo sapiens (Human)).